The following is a 29-amino-acid chain: Cytolysin Oshem 1 (29 aa).

It is found in the secreted. The protein resides in the nematocyst. Its subcellular location is the target cell membrane. In terms of biological role, cytolysin that shows moderate hemolysis and moderate myonecrosis. This is Cytolysin Oshem 1 from Olindias sambaquiensis (Hydromedusa).